Consider the following 217-residue polypeptide: Claudin-9 (217 aa).

The Cytoplasmic portion of the chain corresponds to 1-7; sequence MASTGLE. The chain crosses the membrane as a helical span at residues 8–28; that stretch reads LLGMTLAVLGWLGTLVSCALP. The Extracellular segment spans residues 29-81; that stretch reads LWKVTAFIGNSIVVAQVVWEGLWMSCVVQSTGQMQCKVYDSLLALPQDLQAAR. Residues 82–102 traverse the membrane as a helical segment; sequence ALCVIALLLALLGLLVAITGA. At 103-116 the chain is on the cytoplasmic side; sequence QCTTCVEDEGAKAR. The helical transmembrane segment at 117 to 137 threads the bilayer; the sequence is IVLTAGVILLLAGILVLIPVC. The Extracellular segment spans residues 138 to 159; sequence WTAHAIIQDFYNPLVAEALKRE. A helical membrane pass occupies residues 160–180; that stretch reads LGASLYLGWAAAALLMLGGGL. The Cytoplasmic segment spans residues 181–217; the sequence is LCCTCPPPQVERPRGPRLGYSIPSRSGASGLDKRDYV. The segment at 194–217 is disordered; the sequence is RGPRLGYSIPSRSGASGLDKRDYV.

Belongs to the claudin family. Interacts with CLDN1, CD81 and OCLN. Expressed in the liver, in peripheral blood mononuclear cells and hepatocarcinoma cell lines.

It is found in the cell junction. Its subcellular location is the tight junction. The protein localises to the cell membrane. In terms of biological role, plays a major role in tight junction-specific obliteration of the intercellular space, through calcium-independent cell-adhesion activity. Its function is as follows. (Microbial infection) Acts as a receptor for hepatitis C virus (HCV) entry into hepatic cells. The chain is Claudin-9 (CLDN9) from Homo sapiens (Human).